A 146-amino-acid polypeptide reads, in one-letter code: Large ribosomal subunit protein uL15 (146 aa).

Positions 1 to 54 (MKLHELQPAAGSRKAPKRVGRGTGSGLGRNAGKGEKGQNARSGGGVRPGFEGGQ) are disordered. Composition is skewed to gly residues over residues 21 to 31 (RGTGSGLGRNA) and 42 to 52 (SGGGVRPGFEG).

It belongs to the universal ribosomal protein uL15 family. Part of the 50S ribosomal subunit.

Functionally, binds to the 23S rRNA. This chain is Large ribosomal subunit protein uL15, found in Clostridium botulinum (strain Alaska E43 / Type E3).